We begin with the raw amino-acid sequence, 519 residues long: Glutamate--cysteine ligase (519 aa).

The protein belongs to the glutamate--cysteine ligase type 1 family. Type 1 subfamily.

The catalysed reaction is L-cysteine + L-glutamate + ATP = gamma-L-glutamyl-L-cysteine + ADP + phosphate + H(+). The protein operates within sulfur metabolism; glutathione biosynthesis; glutathione from L-cysteine and L-glutamate: step 1/2. The chain is Glutamate--cysteine ligase from Yersinia pseudotuberculosis serotype I (strain IP32953).